We begin with the raw amino-acid sequence, 218 residues long: Dual specificity protein phosphatase TpbA (218 aa).

Residues 1 to 28 (MHRSPLAWLRLLLAAVLGAFLLGGPLHA) form the signal peptide. The Tyrosine-protein phosphatase domain maps to 44-188 (DPSINLYRMS…YVRGADVDGL (145 aa)). Catalysis depends on Asp105, which acts as the Proton donor/acceptor. The Phosphocysteine intermediate role is filled by Cys132.

This sequence belongs to the protein-tyrosine phosphatase family. Monomer in solution.

Its subcellular location is the periplasm. The catalysed reaction is O-phospho-L-tyrosyl-[protein] + H2O = L-tyrosyl-[protein] + phosphate. It catalyses the reaction O-phospho-L-threonyl-[protein] + H2O = L-threonyl-[protein] + phosphate. It carries out the reaction O-phospho-L-seryl-[protein] + H2O = L-seryl-[protein] + phosphate. The phosphatase activity is completely inhibited by trisodium orthovanadate, a tyrosine phosphatase specific inhibitor. Its function is as follows. Phosphatase that regulates diverse phenotypes in P.aeruginosa via regulation of the concentration of cellular c-di-GMP. Acts by dephosphorylating the membrane-anchored diguanylate cyclase TpbB at tyrosine and serine/threonine sites, leading to inactivation of TpbB and reduced c-di-GMP production. The reduced cellular c-di-GMP concentration leads to reduced adhesin expression, reduced extracellular polysaccharide (EPS) production, pellicule production, cell aggregation and biofilm formation, and enhanced swimming and swarming. It affects colony morphology and controls rugose colony formation. TpbA also acts as a positive regulator of extracellular DNA (eDNA, a major component of the biofilm matrix) and cell lysis by reducing c-di-GMP concentrations. In vitro shows phosphatase activity toward p-nitrophenyl phosphate (pNPP), tyrosine phosphopeptides and a threonine phosphopeptide. Does not have phosphodiesterases (PDE) activity, and cannot degrade c-di-GMP. The sequence is that of Dual specificity protein phosphatase TpbA from Pseudomonas aeruginosa (strain UCBPP-PA14).